A 450-amino-acid chain; its full sequence is Aspartyl/glutamyl-tRNA(Asn/Gln) amidotransferase subunit B (450 aa).

The protein belongs to the GatB/GatE family. GatB subfamily. In terms of assembly, heterotrimer of A, B and C subunits.

The enzyme catalyses L-glutamyl-tRNA(Gln) + L-glutamine + ATP + H2O = L-glutaminyl-tRNA(Gln) + L-glutamate + ADP + phosphate + H(+). It catalyses the reaction L-aspartyl-tRNA(Asn) + L-glutamine + ATP + H2O = L-asparaginyl-tRNA(Asn) + L-glutamate + ADP + phosphate + 2 H(+). In terms of biological role, allows the formation of correctly charged Asn-tRNA(Asn) or Gln-tRNA(Gln) through the transamidation of misacylated Asp-tRNA(Asn) or Glu-tRNA(Gln) in organisms which lack either or both of asparaginyl-tRNA or glutaminyl-tRNA synthetases. The reaction takes place in the presence of glutamine and ATP through an activated phospho-Asp-tRNA(Asn) or phospho-Glu-tRNA(Gln). In Methanobrevibacter smithii (strain ATCC 35061 / DSM 861 / OCM 144 / PS), this protein is Aspartyl/glutamyl-tRNA(Asn/Gln) amidotransferase subunit B.